A 138-amino-acid polypeptide reads, in one-letter code: Large ribosomal subunit protein bL17 (138 aa).

The protein belongs to the bacterial ribosomal protein bL17 family. Part of the 50S ribosomal subunit. Contacts protein L32.

This chain is Large ribosomal subunit protein bL17, found in Granulibacter bethesdensis (strain ATCC BAA-1260 / CGDNIH1).